A 322-amino-acid polypeptide reads, in one-letter code: uncharacterized protein (322 aa).

An N-terminal signal peptide occupies residues 1–32 (MRDGIGKRAASALFLCGVLVMLAVSSAIVSSA).

This is an uncharacterized protein from Bacillus subtilis (strain 168).